We begin with the raw amino-acid sequence, 1116 residues long: Electrogenic sodium bicarbonate cotransporter 4 (1116 aa).

The segment covering 1-14 has biased composition (basic and acidic residues); that stretch reads MKVDEEKAGVKKLD. 3 disordered regions span residues 1–92, 222–257, and 431–467; these read MKVD…TRSP, PIHR…STED, and PGQM…SGDE. At 1–515 the chain is on the cytoplasmic side; the sequence is MKVDEEKAGV…YDGFHLQSIS (515 aa). The segment covering 233–247 has biased composition (low complexity); the sequence is SVSTTNRSSARSSSA. Gly residues predominate over residues 437–464; sequence SVGGGGASAGGGGSGGGAGGSGAGGVGS. Residues 516-536 form a helical membrane-spanning segment; the sequence is AVLFIYLGCITNAITFGGLLG. At 537-558 the chain is on the extracellular side; the sequence is DATDNYQGVMESFLGTAMAGSL. Residues 559-579 form a helical membrane-spanning segment; that stretch reads FCLFSGQPLIILSSTGPILIF. Topologically, residues 580-600 are cytoplasmic; sequence EKLLFDFSKANGLDYMEFRLW. A helical membrane pass occupies residues 601–621; the sequence is IGLHSAIQCLILVATDASFII. Topologically, residues 622–631 are extracellular; sequence KYITRFTEEG. The chain crosses the membrane as a helical span at residues 632-652; sequence FSTLISFIFIYDAIKKMIGAF. Topologically, residues 653 to 730 are cytoplasmic; that stretch reads KYYPINTDFK…GGRLLGSSCQ (78 aa). A helical transmembrane segment spans residues 731-751; the sequence is FVPDLALMSFILFFGTYSMTL. Over 752-768 the chain is Extracellular; the sequence is TLKKFKFSRYFPTKVRT. Residues 769-789 form a helical membrane-spanning segment; the sequence is LVADFSIVFSILLFCGIDACF. Residues 790–819 are Cytoplasmic-facing; sequence GLQTPKLHVPSVIKPTRPDRGWFVAPFGKN. Residues 820-840 form a helical membrane-spanning segment; it reads PWWVYPASILPALLVTILIFM. Residues 841–865 lie on the Extracellular side of the membrane; sequence DQQITAVIVNRKENKLRKAAGYHLD. The chain crosses the membrane as a helical span at residues 866-886; the sequence is LFWVGILMALCSFTGLPWYVA. Topologically, residues 887–922 are cytoplasmic; the sequence is ATVISIAHIDSLKMETETSAPGEQPQFLGVREQRVT. A helical membrane pass occupies residues 923-943; sequence GVMVFILTGISVFLAPILKYI. At 944 to 945 the chain is on the extracellular side; the sequence is PM. A helical transmembrane segment spans residues 946 to 966; that stretch reads PVLYGVFLYMGVASLNGIQFW. Residues 967-987 are Cytoplasmic-facing; that stretch reads ERCKLFLMPAKHQPDHAFLRH. Transmembrane regions (helical) follow at residues 988–1008 and 1009–1029; these read VPLR…ALLW and ILKS…LIIV. The Cytoplasmic portion of the chain corresponds to 1030–1116; sequence RRLLDLIFSQ…KRSSSWSYSL (87 aa).

The protein belongs to the anion exchanger (TC 2.A.31) family.

It is found in the apical cell membrane. The protein resides in the basolateral cell membrane. The catalysed reaction is 2 hydrogencarbonate(out) + Na(+)(out) = 2 hydrogencarbonate(in) + Na(+)(in). The enzyme catalyses 3 hydrogencarbonate(out) + Na(+)(out) = 3 hydrogencarbonate(in) + Na(+)(in). Its function is as follows. Mediates sodium- and bicarbonate-dependent electrogenic sodium bicarbonate cotransport, with a Na(+):HCO3(-) stoichiometry varying from 1:2 to 1:3. This chain is Electrogenic sodium bicarbonate cotransporter 4 (Slc4a5), found in Mus musculus (Mouse).